The following is a 304-amino-acid chain: Tetrahydromethanopterin S-methyltransferase subunit E (304 aa).

6 helical membrane-spanning segments follow: residues 3–23 (PLIG…AGAS), 86–106 (PLFA…TFAV), 131–151 (HTPV…VVSY), 152–172 (LMTV…IWGI), 233–253 (PVTG…TTVF), and 263–283 (WISV…NWKI).

Belongs to the MtrE family. In terms of assembly, the complex is composed of 8 subunits; MtrA, MtrB, MtrC, MtrD, MtrE, MtrF, MtrG and MtrH.

Its subcellular location is the cell membrane. The enzyme catalyses 5-methyl-5,6,7,8-tetrahydromethanopterin + coenzyme M + 2 Na(+)(in) = 5,6,7,8-tetrahydromethanopterin + methyl-coenzyme M + 2 Na(+)(out). It functions in the pathway one-carbon metabolism; methanogenesis from CO(2); methyl-coenzyme M from 5,10-methylene-5,6,7,8-tetrahydromethanopterin: step 2/2. Part of a complex that catalyzes the formation of methyl-coenzyme M and tetrahydromethanopterin from coenzyme M and methyl-tetrahydromethanopterin. This is an energy-conserving, sodium-ion translocating step. This chain is Tetrahydromethanopterin S-methyltransferase subunit E, found in Methanosarcina acetivorans (strain ATCC 35395 / DSM 2834 / JCM 12185 / C2A).